A 141-amino-acid polypeptide reads, in one-letter code: Large ribosomal subunit protein uL11 (141 aa).

This sequence belongs to the universal ribosomal protein uL11 family. As to quaternary structure, part of the ribosomal stalk of the 50S ribosomal subunit. Interacts with L10 and the large rRNA to form the base of the stalk. L10 forms an elongated spine to which L12 dimers bind in a sequential fashion forming a multimeric L10(L12)X complex. In terms of processing, one or more lysine residues are methylated.

Functionally, forms part of the ribosomal stalk which helps the ribosome interact with GTP-bound translation factors. This chain is Large ribosomal subunit protein uL11, found in Leptospira biflexa serovar Patoc (strain Patoc 1 / Ames).